Reading from the N-terminus, the 414-residue chain is Ferredoxin--NAD(P)(+) reductase fdr (414 aa).

7–38 is an FAD binding site; sequence DVVIVGAGHGGAQTAIALRQNGFAGTIAIIGA. Position 149-177 (149-177) interacts with NAD(+); it reads KVVIIGGGYIGLEAAAVMAKFGKNVTLIE.

Belongs to the FAD-dependent oxidoreductase family. In terms of assembly, monomer. Carbazole 1,9a-dioxygenase complex consists of a terminal oxygenase component CarAa, a ferredoxin reductase component fdr and a ferredoxin component CarAc. Requires FAD as cofactor.

The catalysed reaction is 2 reduced [2Fe-2S]-[ferredoxin] + NAD(+) + H(+) = 2 oxidized [2Fe-2S]-[ferredoxin] + NADH. It catalyses the reaction 2 reduced [2Fe-2S]-[ferredoxin] + NADP(+) + H(+) = 2 oxidized [2Fe-2S]-[ferredoxin] + NADPH. In terms of biological role, part of the multicomponent carbazole 1,9a-dioxygenase (CARDO), that converts carbazole (CAR) into 2-aminobiphenyl-2,3-diol. This Sphingomonas sp protein is Ferredoxin--NAD(P)(+) reductase fdr (fdr).